The primary structure comprises 37 residues: Potassium channel toxin alpha-KTx 15.3 (37 aa).

A Pyrrolidone carboxylic acid modification is found at glutamine 1. 3 disulfides stabilise this stretch: cysteine 8–cysteine 28, cysteine 13–cysteine 33, and cysteine 17–cysteine 35.

In terms of tissue distribution, expressed by the venom gland.

It localises to the secreted. Its function is as follows. Inhibits A-type (Kv4) voltage-gated potassium channels of striated neurons (Ki=131 nM), probably by acting as a pore blocker. Has also been shown to block ERG1/Kv11.1/KCNH2 potassium channels (IC(50)=7.9 uM). The presence of the Kv4-associated proteins DPP6 or DPP10 is mandatory to have high-affinity blockade of Kv4.2/KCND2 and Kv4.3/KCND3 channels (80-90% inhibition at 500 nM of toxin). In contrast, the presence of the Kv4-associated protein KChIP1/KCNIP1 does not enhance the affinity blockade (only 40% inhibition at 500 nM). In adult rat brain, the toxin binds to sites in the striatum, and cerebellum. It shares the same target in rat brain than AaTX1 (AC Q867F4) and BmTX3 (AC Q8I0L5). In DPP6 knockout mice, A-type currents are about 20-fold less affected by the toxin. In rodent models of Parkinson's disease, the toxin reduces motor symptoms and emotional and cognitive symptoms. The protein is Potassium channel toxin alpha-KTx 15.3 of Androctonus mauritanicus mauritanicus (Scorpion).